The following is a 75-amino-acid chain: Guanine nucleotide-binding protein G(I)/G(S)/G(O) subunit gamma-3 (75 aa).

Position 5 is a phosphothreonine (Thr-5). Position 9 is a phosphoserine (Ser-9). Position 10 is a phosphothreonine (Thr-10). Ser-12 carries the post-translational modification Phosphoserine. Cys-72 is subject to Cysteine methyl ester. A lipid anchor (S-geranylgeranyl cysteine) is attached at Cys-72. The propeptide at 73–75 (ALL) is removed in mature form.

It belongs to the G protein gamma family. As to quaternary structure, g proteins are composed of 3 units, alpha, beta and gamma. Forms a complex with GNAO1 and GNB1. Interacts with SCN8A. In terms of tissue distribution, abundantly expressed in brain. Low levels in testis.

The protein localises to the cell membrane. Its function is as follows. Guanine nucleotide-binding proteins (G proteins) are involved as a modulator or transducer in various transmembrane signaling systems. The beta and gamma chains are required for the GTPase activity, for replacement of GDP by GTP, and for G protein-effector interaction. This Bos taurus (Bovine) protein is Guanine nucleotide-binding protein G(I)/G(S)/G(O) subunit gamma-3 (GNG3).